A 451-amino-acid polypeptide reads, in one-letter code: MELPLLALLSLGLVCQGGQGLVPPNELKQLSAAGSKYIDAEVENAINGVKQMKTLMDKTSKEHQAMLHTLEETKKKKEEAVKLALEKEKQLAEKQEVCNETMLSLWEECKPCLKHTCMRVYSKMCHSGSGLVGRQLEEFLNRSSPFSIWVNGERIDDLLDREQRQERRFEDLEERFGLMEDGVEDIFQDSTQLYGPAFPFFRTPPFGGFREAFVPPVQRVHLVPRRRLSRELHPFFQHPMHGFHRLFQPLFEMTQHMLDGGHGAWEHPLGGFATESRNFSTDRMVCREIRRNSAGCLRMRDECEKCREILAVDCSQTDPVQSQLREQFEDALRLAERFTRRYDDLLSAFQAEMLNTSSLLDQLNRQFGWVSRLGNLTQGNDGFLQVTTVFSKTPNLEDPSAPADTQVTVQLFDSEPLSLTVPGDISWDDPRFMEIVAEQALQHYKQNNTIE.

Positions 1–18 (MELPLLALLSLGLVCQGG) are cleaved as a signal peptide. 5 disulfides stabilise this stretch: Cys98–Cys314, Cys109–Cys306, Cys112–Cys303, Cys117–Cys296, and Cys125–Cys286. 6 N-linked (GlcNAc...) asparagine glycosylation sites follow: Asn99, Asn141, Asn278, Asn355, Asn375, and Asn447.

Belongs to the clusterin family. In terms of assembly, antiparallel disulfide-linked heterodimer of an alpha chain and a beta chain. Self-associates and forms higher oligomers. Interacts with a broad range of misfolded proteins. Post-translationally, proteolytically cleaved on its way through the secretory system, probably within the Golgi lumen. In terms of processing, polyubiquitinated, leading to proteasomal degradation.

Its subcellular location is the secreted. It is found in the cytoplasmic vesicle. The protein localises to the secretory vesicle. It localises to the chromaffin granule. The protein resides in the nucleus. Its subcellular location is the cytoplasm. It is found in the mitochondrion membrane. The protein localises to the cytosol. It localises to the endoplasmic reticulum. Its function is as follows. Functions as extracellular chaperone that prevents aggregation of nonnative proteins. Prevents stress-induced aggregation of blood plasma proteins. Does not require ATP. Maintains partially unfolded proteins in a state appropriate for subsequent refolding by other chaperones, such as HSPA8/HSC70. Does not refold proteins by itself. Binding to cell surface receptors triggers internalization of the chaperone-client complex and subsequent lysosomal or proteasomal degradation. When secreted, protects cells against apoptosis and against cytolysis by complement: inhibits assembly of the complement membrane attack complex (MAC) by preventing polymerization of C9 pore component of the MAC complex. Intracellular forms interact with ubiquitin and SCF (SKP1-CUL1-F-box protein) E3 ubiquitin-protein ligase complexes and promote the ubiquitination and subsequent proteasomal degradation of target proteins. Modulates NF-kappa-B transcriptional activity. Promotes apoptosis when in the nucleus. Inhibits apoptosis when associated with the mitochondrial membrane by interference with BAX-dependent release of cytochrome c into the cytoplasm. Plays a role in the regulation of cell proliferation. The protein is Clusterin (CLU) of Coturnix japonica (Japanese quail).